A 511-amino-acid polypeptide reads, in one-letter code: Prolyl 3-hydroxylase OGFOD1 (511 aa).

The disordered stretch occupies residues 1–20 (MTGKRGTAAGTDGSGNKKGK). The region spanning 138–240 (KTVDISCAQY…RLSVSGWFHG (103 aa)) is the Fe2OG dioxygenase domain. Residues H156 and D158 each coordinate Fe cation. Y170 serves as a coordination point for 2-oxoglutarate. Residue H219 coordinates Fe cation. R231 contacts 2-oxoglutarate. The interval 372–403 (NEESDEGEGPSEPNTVSQQGASSEDDKVPSCS) is disordered.

This sequence belongs to the TPA1 family. In terms of assembly, monomer. Fe(2+) serves as cofactor. It depends on L-ascorbate as a cofactor.

It localises to the cytoplasm. Its subcellular location is the nucleus. The enzyme catalyses [ribosomal protein uS12]-L-proline + 2-oxoglutarate + O2 = [ribosomal protein uS12]-(3S)-3-hydroxy-L-proline + succinate + CO2. Its function is as follows. Prolyl 3-hydroxylase that catalyzes 3-hydroxylation of 'Pro-62' of small ribosomal subunit uS12 (rps23), thereby regulating protein translation termination efficiency. Involved in stress granule formation. This Xenopus laevis (African clawed frog) protein is Prolyl 3-hydroxylase OGFOD1 (ogfod1).